Reading from the N-terminus, the 251-residue chain is Putative F-box protein PP2-B12 (251 aa).

In terms of domain architecture, F-box spans 1-46 (MNFLDLPEECIATMISFTSPFDACRISAVSKLLRSAADSNTTWERF).

The chain is Putative F-box protein PP2-B12 (PP2B12) from Arabidopsis thaliana (Mouse-ear cress).